Reading from the N-terminus, the 258-residue chain is Uroplakin-1a (258 aa).

At methionine 1–proline 14 the chain is on the cytoplasmic side. Residues valine 15–phenylalanine 35 form a helical membrane-spanning segment. Residues alanine 36–aspartate 59 are Extracellular-facing. The chain crosses the membrane as a helical span at residues valine 60–leucine 86. Residues cysteine 87–serine 91 are Cytoplasmic-facing. The chain crosses the membrane as a helical span at residues methionine 92–isoleucine 112. At threonine 113–threonine 230 the chain is on the extracellular side. The N-linked (GlcNAc...) asparagine glycan is linked to asparagine 170. The helical transmembrane segment at tryptophan 231–methionine 252 threads the bilayer. Topologically, residues tyrosine 253 to leucine 258 are cytoplasmic.

The protein belongs to the tetraspanin (TM4SF) family. As to quaternary structure, homodimer; disulfide-linked. Interacts with uroplakin-2 (UPK2). The N-terminus is blocked. Post-translationally, N-glycosylated with high-mannose oligosaccharides. Bladder epithelium.

It localises to the membrane. Component of the asymmetric unit membrane (AUM); a highly specialized biomembrane elaborated by terminally differentiated urothelial cells. May play an important role in normal bladder epithelial physiology, possibly in regulating membrane permeability of superficial umbrella cells or in stabilizing the apical membrane through AUM/cytoskeletal interactions. This chain is Uroplakin-1a (UPK1A), found in Bos taurus (Bovine).